Consider the following 667-residue polypeptide: DNA ligase (667 aa).

NAD(+) contacts are provided by residues 32-36 (DSEYD), 81-82 (SL), and glutamate 110. Lysine 112 serves as the catalytic N6-AMP-lysine intermediate. The NAD(+) site is built by arginine 133, glutamate 167, lysine 283, and lysine 307. Zn(2+) is bound by residues cysteine 401, cysteine 404, cysteine 419, and cysteine 424. The region spanning 586-667 (EGHPEFSGKT…FVDKQNELNS (82 aa)) is the BRCT domain.

This sequence belongs to the NAD-dependent DNA ligase family. LigA subfamily. Mg(2+) is required as a cofactor. It depends on Mn(2+) as a cofactor.

It catalyses the reaction NAD(+) + (deoxyribonucleotide)n-3'-hydroxyl + 5'-phospho-(deoxyribonucleotide)m = (deoxyribonucleotide)n+m + AMP + beta-nicotinamide D-nucleotide.. In terms of biological role, DNA ligase that catalyzes the formation of phosphodiester linkages between 5'-phosphoryl and 3'-hydroxyl groups in double-stranded DNA using NAD as a coenzyme and as the energy source for the reaction. It is essential for DNA replication and repair of damaged DNA. The chain is DNA ligase from Staphylococcus aureus (strain USA300).